We begin with the raw amino-acid sequence, 343 residues long: Probable dual-specificity RNA methyltransferase RlmN (343 aa).

Glu-91 serves as the catalytic Proton acceptor. The Radical SAM core domain maps to 97–326 (HPDRITACIS…AEIRREKGAD (230 aa)). Cys-104 and Cys-331 are disulfide-bonded. [4Fe-4S] cluster-binding residues include Cys-111, Cys-115, and Cys-118. Residues 158-159 (GE), Ser-190, 213-215 (SLH), and Asn-289 each bind S-adenosyl-L-methionine. Residue Cys-331 is the S-methylcysteine intermediate of the active site.

It belongs to the radical SAM superfamily. RlmN family. Requires [4Fe-4S] cluster as cofactor.

Its subcellular location is the cytoplasm. It catalyses the reaction adenosine(2503) in 23S rRNA + 2 reduced [2Fe-2S]-[ferredoxin] + 2 S-adenosyl-L-methionine = 2-methyladenosine(2503) in 23S rRNA + 5'-deoxyadenosine + L-methionine + 2 oxidized [2Fe-2S]-[ferredoxin] + S-adenosyl-L-homocysteine. The catalysed reaction is adenosine(37) in tRNA + 2 reduced [2Fe-2S]-[ferredoxin] + 2 S-adenosyl-L-methionine = 2-methyladenosine(37) in tRNA + 5'-deoxyadenosine + L-methionine + 2 oxidized [2Fe-2S]-[ferredoxin] + S-adenosyl-L-homocysteine. Specifically methylates position 2 of adenine 2503 in 23S rRNA and position 2 of adenine 37 in tRNAs. This Thermotoga petrophila (strain ATCC BAA-488 / DSM 13995 / JCM 10881 / RKU-1) protein is Probable dual-specificity RNA methyltransferase RlmN.